A 421-amino-acid chain; its full sequence is Serine hydroxymethyltransferase (421 aa).

Residues L121 and 125–127 (GHL) contribute to the (6S)-5,6,7,8-tetrahydrofolate site. Position 230 is an N6-(pyridoxal phosphate)lysine (K230). 355–357 (SPF) is a (6S)-5,6,7,8-tetrahydrofolate binding site.

This sequence belongs to the SHMT family. As to quaternary structure, homodimer. Pyridoxal 5'-phosphate is required as a cofactor.

The protein localises to the cytoplasm. It carries out the reaction (6R)-5,10-methylene-5,6,7,8-tetrahydrofolate + glycine + H2O = (6S)-5,6,7,8-tetrahydrofolate + L-serine. Its pathway is one-carbon metabolism; tetrahydrofolate interconversion. It participates in amino-acid biosynthesis; glycine biosynthesis; glycine from L-serine: step 1/1. Catalyzes the reversible interconversion of serine and glycine with tetrahydrofolate (THF) serving as the one-carbon carrier. This reaction serves as the major source of one-carbon groups required for the biosynthesis of purines, thymidylate, methionine, and other important biomolecules. Also exhibits THF-independent aldolase activity toward beta-hydroxyamino acids, producing glycine and aldehydes, via a retro-aldol mechanism. The polypeptide is Serine hydroxymethyltransferase (Cellvibrio japonicus (strain Ueda107) (Pseudomonas fluorescens subsp. cellulosa)).